The primary structure comprises 486 residues: Transcription factor bHLH49 (486 aa).

The segment covering 1–17 (MDLSAKDEFSAEKRNPD) has biased composition (basic and acidic residues). Disordered stretches follow at residues 1-30 (MDLSAKDEFSAEKRNPDNYDSVNNPSGDWR) and 194-300 (KEST…KDGY). 2 stretches are compositionally biased toward polar residues: residues 198 to 221 (VRSSEQAKPNVPGSGNVSEDTQSS) and 243 to 254 (QKNSEAAQSHRS). The span at 273–293 (QSPNSPGKKSNSGKQQGKQSS) shows a compositional bias: low complexity. A bHLH domain is found at 309 to 359 (QATNSHSLAERVRREKISERMKFLQDLVPGCNKVTGKAVMLDEIINYVQSL).

Homodimer. Interacts with IBH1. As to expression, expressed constitutively in roots, stems, and flowers.

The protein resides in the nucleus. Transcriptional activator involved in cell elongation. Regulates the expression of a subset of genes involved in cell expansion by binding to the G-box motif. This Arabidopsis thaliana (Mouse-ear cress) protein is Transcription factor bHLH49 (BHLH49).